The sequence spans 585 residues: Neopullulanase 2 (585 aa).

Residues N143, D145, N148, D149, G169, and D171 each contribute to the Ca(2+) site. 2 residues coordinate substrate: H244 and R323. D325 serves as the catalytic Nucleophile. E354 acts as the Proton donor in catalysis. Residues 420–421, D465, and R469 contribute to the substrate site; that span reads HD.

This sequence belongs to the glycosyl hydrolase 13 family. Monomer. Requires Ca(2+) as cofactor.

It carries out the reaction Hydrolysis of pullulan to panose (6-alpha-D-glucosylmaltose).. Functionally, hydrolyzes pullulan efficiently but only a small amount of starch. Endohydrolysis of 1,4-alpha-glucosidic linkages in pullulan to form panose. Also cleaves (1-6)-alpha-glucosidic linkages to form maltotriose. The chain is Neopullulanase 2 (tvaII) from Thermoactinomyces vulgaris.